Here is a 173-residue protein sequence, read N- to C-terminus: Transcription factor E (173 aa).

Positions 6 to 89 (PLEELLEFVR…YWYVDRETLN (84 aa)) constitute an HTH TFE/IIEalpha-type domain.

The protein belongs to the TFE family. In terms of assembly, monomer. Interaction with RNA polymerase subunits RpoF and RpoE is necessary for Tfe stimulatory transcription activity. Able to interact with Tbp and RNA polymerase in the absence of DNA promoter. Interacts both with the preinitiation and elongation complexes.

Transcription factor that plays a role in the activation of archaeal genes transcribed by RNA polymerase. Facilitates transcription initiation by enhancing TATA-box recognition by TATA-box-binding protein (Tbp), and transcription factor B (Tfb) and RNA polymerase recruitment. Not absolutely required for transcription in vitro, but particularly important in cases where Tbp or Tfb function is not optimal. It dynamically alters the nucleic acid-binding properties of RNA polymerases by stabilizing the initiation complex and destabilizing elongation complexes. Seems to translocate with the RNA polymerase following initiation and acts by binding to the non template strand of the transcription bubble in elongation complexes. The sequence is that of Transcription factor E from Ignicoccus hospitalis (strain KIN4/I / DSM 18386 / JCM 14125).